Here is a 636-residue protein sequence, read N- to C-terminus: 1-deoxy-D-xylulose-5-phosphate synthase (636 aa).

Residues histidine 74 and 115-117 (GHA) contribute to the thiamine diphosphate site. A Mg(2+)-binding site is contributed by aspartate 146. Residues 147 to 148 (GA), asparagine 175, tyrosine 285, and glutamate 368 contribute to the thiamine diphosphate site. A Mg(2+)-binding site is contributed by asparagine 175.

The protein belongs to the transketolase family. DXPS subfamily. In terms of assembly, homodimer. Mg(2+) is required as a cofactor. Requires thiamine diphosphate as cofactor.

It carries out the reaction D-glyceraldehyde 3-phosphate + pyruvate + H(+) = 1-deoxy-D-xylulose 5-phosphate + CO2. It participates in metabolic intermediate biosynthesis; 1-deoxy-D-xylulose 5-phosphate biosynthesis; 1-deoxy-D-xylulose 5-phosphate from D-glyceraldehyde 3-phosphate and pyruvate: step 1/1. Its function is as follows. Catalyzes the acyloin condensation reaction between C atoms 2 and 3 of pyruvate and glyceraldehyde 3-phosphate to yield 1-deoxy-D-xylulose-5-phosphate (DXP). In Anaeromyxobacter dehalogenans (strain 2CP-1 / ATCC BAA-258), this protein is 1-deoxy-D-xylulose-5-phosphate synthase.